The primary structure comprises 544 residues: NADH-quinone oxidoreductase subunit C/D (544 aa).

Positions 1-138 (MLNCDMLIDS…KGQICTETED (138 aa)) are NADH dehydrogenase I subunit C. Residues 161-544 (MLLNVGPSHP…MNFIAGEFDR (384 aa)) form an NADH dehydrogenase I subunit D region.

In the N-terminal section; belongs to the complex I 30 kDa subunit family. The protein in the C-terminal section; belongs to the complex I 49 kDa subunit family. As to quaternary structure, NDH-1 is composed of 13 different subunits. Subunits NuoB, CD, E, F, and G constitute the peripheral sector of the complex.

Its subcellular location is the cell inner membrane. The catalysed reaction is a quinone + NADH + 5 H(+)(in) = a quinol + NAD(+) + 4 H(+)(out). NDH-1 shuttles electrons from NADH, via FMN and iron-sulfur (Fe-S) centers, to quinones in the respiratory chain. The immediate electron acceptor for the enzyme in this species is believed to be ubiquinone. Couples the redox reaction to proton translocation (for every two electrons transferred, four hydrogen ions are translocated across the cytoplasmic membrane), and thus conserves the redox energy in a proton gradient. This chain is NADH-quinone oxidoreductase subunit C/D, found in Aliarcobacter butzleri (strain RM4018) (Arcobacter butzleri).